A 202-amino-acid chain; its full sequence is Cytochrome c oxidase assembly protein CtaG (202 aa).

Over 1–14 (MSDKAAAPRKQGRN) the chain is Cytoplasmic. A helical; Signal-anchor for type II membrane protein transmembrane segment spans residues 15-37 (NGAVVMMCLSFVFGMGAMSYAAV). The Periplasmic portion of the chain corresponds to 38 to 202 (PLYRIFCQVT…GGTVKIEKKL (165 aa)).

Belongs to the COX11/CtaG family.

Its subcellular location is the cell inner membrane. In terms of biological role, exerts its effect at some terminal stage of cytochrome c oxidase synthesis, probably by being involved in the insertion of the copper B into subunit I. This is Cytochrome c oxidase assembly protein CtaG from Rhizobium etli (strain ATCC 51251 / DSM 11541 / JCM 21823 / NBRC 15573 / CFN 42).